We begin with the raw amino-acid sequence, 254 residues long: Pyrroloquinoline-quinone synthase (254 aa).

This sequence belongs to the PqqC family.

It catalyses the reaction 6-(2-amino-2-carboxyethyl)-7,8-dioxo-1,2,3,4,7,8-hexahydroquinoline-2,4-dicarboxylate + 3 O2 = pyrroloquinoline quinone + 2 H2O2 + 2 H2O + H(+). It functions in the pathway cofactor biosynthesis; pyrroloquinoline quinone biosynthesis. Its function is as follows. Ring cyclization and eight-electron oxidation of 3a-(2-amino-2-carboxyethyl)-4,5-dioxo-4,5,6,7,8,9-hexahydroquinoline-7,9-dicarboxylic-acid to PQQ. This Rhodopseudomonas palustris (strain ATCC BAA-98 / CGA009) protein is Pyrroloquinoline-quinone synthase.